Here is a 370-residue protein sequence, read N- to C-terminus: 5-hydroxytryptamine receptor 5B (370 aa).

Residues 1 to 36 (MEVSNLSGATPGLAFPPGPESCSDSPSSGRSMGSTP) are disordered. The Extracellular segment spans residues 1–48 (MEVSNLSGATPGLAFPPGPESCSDSPSSGRSMGSTPGGLILPGREPPF). Asn5 is a glycosylation site (N-linked (GlcNAc...) asparagine). A compositionally biased stretch (low complexity) spans 20–36 (ESCSDSPSSGRSMGSTP). A helical transmembrane segment spans residues 49–75 (SAFTVLVVTLLVLLIAATFLWNLLVLV). Residues 76–88 (TILRVRAFHRVPH) lie on the Cytoplasmic side of the membrane. Residues 89–115 (NLVASTAVSDVLVAVLVMPLSLVSELS) traverse the membrane as a helical segment. Residues 116–127 (AGRRWQLGRSLC) lie on the Extracellular side of the membrane. Cys127 and Cys205 are disulfide-bonded. Residues 128–150 (HVWISFDVLCCTASIWNVAAIAL) traverse the membrane as a helical segment. Asp134 provides a ligand contact to serotonin. Over 151-168 (DRYWTITRHLQYTLRTRS) the chain is Cytoplasmic. A helical membrane pass occupies residues 169–189 (RASALMIAITWALSALIALAP). The Extracellular segment spans residues 190–211 (LLFGWGEAYDARLQRCQVSQEP). The chain crosses the membrane as a helical span at residues 212-233 (SYAVFSTCGAFYLPLAVVLFVY). Topologically, residues 234 to 300 (WKIYKAAKFR…QKEKRAAMMV (67 aa)) are cytoplasmic. Residues 301–325 (GILIGVFVLCWIPFFLTELISPLCA) traverse the membrane as a helical segment. The Extracellular portion of the chain corresponds to 326 to 327 (CS). A helical membrane pass occupies residues 328–352 (LPPIWKSIFLWLGYSNSFFNPLIYT). Residues 353 to 370 (AFNKNYNNAFKSLFTKQR) are Cytoplasmic-facing.

Belongs to the G-protein coupled receptor 1 family. As to expression, expressed predominantly in the central nervous system; in the hippocampus, habenula, and the doral raphe.

The protein resides in the cell membrane. Its function is as follows. G-protein coupled receptor for 5-hydroxytryptamine (serotonin), a biogenic hormone that functions as a neurotransmitter, a hormone and a mitogen. Also functions as a receptor for ergot alkaloid derivatives and other psychoactive substances. Ligand binding causes a conformation change that triggers signaling via guanine nucleotide-binding proteins (G proteins) and modulates the activity of downstream effectors. Htr5b is coupled to G(i)/G(o) G alpha proteins and mediates inhibitory neurotransmission: signaling inhibits adenylate cyclase activity and activates a phosphatidylinositol-calcium second messenger system that regulates the release of Ca(2+) ions from intracellular stores. The chain is 5-hydroxytryptamine receptor 5B from Mus musculus (Mouse).